Consider the following 113-residue polypeptide: Large ribosomal subunit protein P2 (113 aa).

The disordered stretch occupies residues 62-113; it reads LASVPSGGAGGAAASGGAAAAGGSAQAEAAPEAAKEEEKEESDEDMGFGLFD. Residues 76-93 are compositionally biased toward low complexity; the sequence is SGGAAAAGGSAQAEAAPE. Residue Ser-103 is modified to Phosphoserine.

Belongs to the eukaryotic ribosomal protein P1/P2 family. In terms of assembly, P1 and P2 exist as dimers at the large ribosomal subunit.

Plays an important role in the elongation step of protein synthesis. This Alternaria alternata (Alternaria rot fungus) protein is Large ribosomal subunit protein P2 (ALTA5).